Reading from the N-terminus, the 959-residue chain is Mitogen-activated protein kinase kinase kinase 13 (959 aa).

The segment at 1-47 is disordered; sequence MANPQEHLSCSSLPHLPLTENKTSGGRNELAAMGNHPSPKLPEDPQE. Positions 7–18 are enriched in low complexity; the sequence is HLSCSSLPHLPL. Positions 167-408 constitute a Protein kinase domain; it reads ISELQWLGSG…FRQTLMHLDI (242 aa). ATP-binding positions include 173 to 181 and Lys194; that span reads LGSGAQGAV. The active-site Proton acceptor is Asp278. 2 leucine-zipper regions span residues 432–453 and 485–506; these read VKKH…DEEL and LSAI…EQAV. 4 disordered regions span residues 533 to 599, 739 to 828, 842 to 902, and 927 to 959; these read KRKG…GSHS, GSLD…RQRP, SSEN…LSDK, and NPVQ…SATW. A compositionally biased stretch (polar residues) spans 566–577; sequence SPLSGSPKMSTA. Over residues 581–593 the composition is skewed to basic residues; it reads SRYRSKPRHRRGN. Composition is skewed to polar residues over residues 754-774 and 780-790; these read DLSS…SERT and SGCQSGISHQF. The segment covering 808–820 has biased composition (acidic residues); sequence DSSEEEGEVDSEV. Residues 866 to 876 show a composition bias toward basic and acidic residues; that stretch reads SANRRQDRLAE. Over residues 934 to 943 the composition is skewed to acidic residues; that stretch reads SDCDSSEGEC. Residues 947-959 show a composition bias toward polar residues; sequence TVRTSKNYSSATW.

The protein belongs to the protein kinase superfamily. STE Ser/Thr protein kinase family. MAP kinase kinase kinase subfamily. Homodimer; forms dimers through the leucine-zipper motif. Interacts with the C-terminus of MAPK8IP1 through the kinase catalytic domain. Binds PRDX3. Associates with the IKK complex through the kinase domain. Requires Mg(2+) as cofactor. Autophosphorylated on serine and threonine residues.

It is found in the cytoplasm. The protein resides in the membrane. The catalysed reaction is L-seryl-[protein] + ATP = O-phospho-L-seryl-[protein] + ADP + H(+). The enzyme catalyses L-threonyl-[protein] + ATP = O-phospho-L-threonyl-[protein] + ADP + H(+). With respect to regulation, activated by autophosphorylation and homodimerization. In terms of biological role, activates the JUN N-terminal pathway through activation of the MAP kinase kinase MAP2K7. Acts synergistically with PRDX3 to regulate the activation of NF-kappa-B in the cytosol. This activation is kinase-dependent and involves activating the IKK complex, the IKBKB-containing complex that phosphorylates inhibitors of NF-kappa-B. This Mus musculus (Mouse) protein is Mitogen-activated protein kinase kinase kinase 13 (Map3k13).